We begin with the raw amino-acid sequence, 229 residues long: uncharacterized protein (229 aa).

It to T.pallidum TP_0315, TP_0618 and TP_0619.

This is an uncharacterized protein from Treponema pallidum (strain Nichols).